The primary structure comprises 105 residues: Phosphoribosyl-AMP cyclohydrolase (105 aa).

Asp-72 is a binding site for Mg(2+). A Zn(2+)-binding site is contributed by Cys-73. Asp-74 and Asp-76 together coordinate Mg(2+). Zn(2+) contacts are provided by Cys-89 and Cys-96.

This sequence belongs to the PRA-CH family. As to quaternary structure, homodimer. Mg(2+) serves as cofactor. It depends on Zn(2+) as a cofactor.

The protein resides in the cytoplasm. It catalyses the reaction 1-(5-phospho-beta-D-ribosyl)-5'-AMP + H2O = 1-(5-phospho-beta-D-ribosyl)-5-[(5-phospho-beta-D-ribosylamino)methylideneamino]imidazole-4-carboxamide. The protein operates within amino-acid biosynthesis; L-histidine biosynthesis; L-histidine from 5-phospho-alpha-D-ribose 1-diphosphate: step 3/9. Functionally, catalyzes the hydrolysis of the adenine ring of phosphoribosyl-AMP. This chain is Phosphoribosyl-AMP cyclohydrolase, found in Listeria monocytogenes serotype 4b (strain CLIP80459).